Consider the following 175-residue polypeptide: ATP-dependent protease subunit HslV (175 aa).

T2 is a catalytic residue. Na(+)-binding residues include A156, C159, and T162.

The protein belongs to the peptidase T1B family. HslV subfamily. A double ring-shaped homohexamer of HslV is capped on each side by a ring-shaped HslU homohexamer. The assembly of the HslU/HslV complex is dependent on binding of ATP.

The protein resides in the cytoplasm. It carries out the reaction ATP-dependent cleavage of peptide bonds with broad specificity.. Its activity is regulated as follows. Allosterically activated by HslU binding. Its function is as follows. Protease subunit of a proteasome-like degradation complex believed to be a general protein degrading machinery. This Rhizobium etli (strain ATCC 51251 / DSM 11541 / JCM 21823 / NBRC 15573 / CFN 42) protein is ATP-dependent protease subunit HslV.